A 203-amino-acid chain; its full sequence is dITP/XTP pyrophosphatase (203 aa).

8–13 (TANKGK) provides a ligand contact to substrate. The Mg(2+) site is built by Glu41 and Asp70. Residue Asp70 is the Proton acceptor of the active site. Residues Ser71, 153-156 (FGYD), Lys176, and 181-182 (HR) each bind substrate.

The protein belongs to the HAM1 NTPase family. As to quaternary structure, homodimer. Mg(2+) serves as cofactor.

It carries out the reaction XTP + H2O = XMP + diphosphate + H(+). The enzyme catalyses dITP + H2O = dIMP + diphosphate + H(+). The catalysed reaction is ITP + H2O = IMP + diphosphate + H(+). Pyrophosphatase that catalyzes the hydrolysis of nucleoside triphosphates to their monophosphate derivatives, with a high preference for the non-canonical purine nucleotides XTP (xanthosine triphosphate), dITP (deoxyinosine triphosphate) and ITP. Seems to function as a house-cleaning enzyme that removes non-canonical purine nucleotides from the nucleotide pool, thus preventing their incorporation into DNA/RNA and avoiding chromosomal lesions. The chain is dITP/XTP pyrophosphatase from Listeria monocytogenes serovar 1/2a (strain ATCC BAA-679 / EGD-e).